Here is a 447-residue protein sequence, read N- to C-terminus: Adenylosuccinate synthetase (447 aa).

Residues 35 to 41 (GDEGKGK) and 63 to 65 (GHT) each bind GTP. The Proton acceptor role is filled by D36. Residues D36 and G63 each contribute to the Mg(2+) site. IMP is bound by residues 36–39 (DEGK), 61–64 (NAGH), T153, R167, N245, T260, and R324. Residue H64 is the Proton donor of the active site. A substrate-binding site is contributed by 320–326 (VTTKRKR). Residues R326, 352–354 (KLD), and 435–437 (GVG) each bind GTP.

Belongs to the adenylosuccinate synthetase family. Homodimer. Mg(2+) serves as cofactor.

Its subcellular location is the cytoplasm. The catalysed reaction is IMP + L-aspartate + GTP = N(6)-(1,2-dicarboxyethyl)-AMP + GDP + phosphate + 2 H(+). Its pathway is purine metabolism; AMP biosynthesis via de novo pathway; AMP from IMP: step 1/2. Plays an important role in the de novo pathway and in the salvage pathway of purine nucleotide biosynthesis. Catalyzes the first committed step in the biosynthesis of AMP from IMP. This chain is Adenylosuccinate synthetase, found in Drosophila sechellia (Fruit fly).